The chain runs to 167 residues: U-scoloptoxin-Er5c (167 aa).

The first 22 residues, 1–22 (MKTNCEFPLLCLLIVLVANVEG), serve as a signal peptide directing secretion. Residues 23 to 94 (EVEDTGLKMV…KRLWRNWERR (72 aa)) constitute a propeptide that is removed on maturation. 3 RLWRNWE repeats span residues 34-40 (RLWRNWE), 61-67 (RLWRNWE), and 86-92 (RLWRNWE). At glutamine 95 the chain carries Pyrrolidone carboxylic acid. The stretch at 107–113 (ELWRNWE) is one RLWRNWE 4; approximate repeat. A propeptide spanning residues 112 to 118 (WEDLKRR) is cleaved from the precursor. A Pyrrolidone carboxylic acid modification is found at glutamine 119. The stretch at 134–140 (RLWRNWE) is one RLWRNWE 5 repeat. Residues 139-167 (WEDNHATLRKRSADSLSRQKRLGRERGKE) constitute a propeptide that is removed on maturation. Residues 147-167 (RKRSADSLSRQKRLGRERGKE) are disordered.

The protein belongs to the scoloptoxin-08 family. As to expression, expressed by the venom gland.

The protein localises to the secreted. The polypeptide is U-scoloptoxin-Er5c (Ethmostigmus rubripes (Giant centipede)).